Consider the following 122-residue polypeptide: Large ribosomal subunit protein uL14c (122 aa).

It belongs to the universal ribosomal protein uL14 family. Part of the 50S ribosomal subunit.

The protein localises to the plastid. Its subcellular location is the chloroplast. Its function is as follows. Binds to 23S rRNA. In Morus indica (Mulberry), this protein is Large ribosomal subunit protein uL14c.